The sequence spans 163 residues: uncharacterized protein (163 aa).

Over residues 1–10 (MTHPLPHDSH) the composition is skewed to basic and acidic residues. 2 disordered regions span residues 1–21 (MTHP…VNKS) and 71–112 (SKQP…EQRR). A compositionally biased stretch (polar residues) spans 90–105 (PASSLQDHSRLTSLSR).

This is an uncharacterized protein from Homo sapiens (Human).